A 105-amino-acid polypeptide reads, in one-letter code: Synaptic plasticity regulator PANTS (105 aa).

This sequence belongs to the UPF0545 family. Interacts with RTN4 isoform A/Nogo-A; the interaction results in enhanced RTN4-mediated inhibition of AMPA receptor clustering. Also interacts with NCAM1, RANBP2 and CCT8. Rapidly degraded by proteolysis following neuronal stimulation, resulting in increased AMPA receptor clustering.

The protein localises to the synapse. It localises to the synaptic cleft. Negatively regulates long-term potentiation and modulates adult synaptic plasticity. Stabilizes the interaction of RTN4 isoform A/Nogo-A with its receptors, inhibiting clustering of postsynaptic AMPA receptors at synaptic sites. Upon neuronal stimulation, degraded at synapses, reducing RTN4 signaling and allowing AMPA receptor clustering at individual synapses. The sequence is that of Synaptic plasticity regulator PANTS (C22orf39) from Homo sapiens (Human).